The chain runs to 1570 residues: Mediator of RNA polymerase II transcription subunit 1 (1570 aa).

2 consecutive short sequence motifs (LXXLL motif) follow at residues 585–589 and 626–630; these read LTSLL and LMNLL. 3 disordered regions span residues 592-687, 771-880, and 922-1561; these read TNNT…TEDD, SKLS…FKDF, and SKTL…MDDD. Basic and acidic residues predominate over residues 675–687; sequence TGAEKMKNQTEDD. Composition is skewed to polar residues over residues 788–801, 832–861, and 931–942; these read RDSS…STLF, GSPN…QSGF, and QETQSRSQSPLL. A compositionally biased stretch (basic and acidic residues) spans 946–958; that stretch reads LGKDRPQKQKVKE. A compositionally biased stretch (gly residues) spans 961-970; that stretch reads NGGGAGGGLS. Low complexity-rich tracts occupy residues 1022–1035, 1066–1082, 1089–1113, 1121–1140, and 1152–1161; these read PTST…GTSG, SSHG…SSSS, SSLS…MKIG, SGQS…SMGK, and SSNVSNSSGS. Residues 1173-1190 are compositionally biased toward polar residues; the sequence is MNPSLSKPNISPSHSRPS. Over residues 1217–1228 the composition is skewed to gly residues; sequence GSGGQHLSGGGS. Low complexity predominate over residues 1229 to 1271; the sequence is NSTTKSSSGLVSSGSLSQKPNSSSSSSSSSSSSSSSSSSSSSS. Positions 1276–1287 are enriched in polar residues; it reads VSQNLHGNSKGK. Residues 1308 to 1328 show a composition bias toward gly residues; the sequence is VGTGGPGSEDPMDGGGGGGST. A compositionally biased stretch (basic and acidic residues) spans 1347–1359; the sequence is PTKREKSEKDKSK. 2 stretches are compositionally biased toward polar residues: residues 1418–1433 and 1441–1455; these read SQMQ…SGST and PSHN…QALD. A compositionally biased stretch (low complexity) spans 1459-1469; sequence ESGSSSIAEKS. The span at 1494–1503 shows a compositional bias: basic residues; it reads KHKKHKKEKK. Residues 1504–1516 are compositionally biased toward basic and acidic residues; that stretch reads RLKDKDRDREKKK. The span at 1536 to 1546 shows a compositional bias: low complexity; sequence MAMSGGSMMSS.

This sequence belongs to the Mediator complex subunit 1 family. In terms of assembly, component of the Mediator complex.

It localises to the nucleus. Its function is as follows. Component of the Mediator complex, a coactivator involved in the regulated transcription of nearly all RNA polymerase II-dependent genes. Mediator functions as a bridge to convey information from gene-specific regulatory proteins to the basal RNA polymerase II transcription machinery. Mediator is recruited to promoters by direct interactions with regulatory proteins and serves as a scaffold for the assembly of a functional preinitiation complex with RNA polymerase II and the general transcription factors. In Xenopus laevis (African clawed frog), this protein is Mediator of RNA polymerase II transcription subunit 1 (med1).